The primary structure comprises 427 residues: Terminal nucleotidyltransferase 5B (427 aa).

A compositionally biased stretch (acidic residues) spans 1–11 (MMPSESGDESL). The tract at residues 1 to 46 (MMPSESGDESLEQPAAQVGTGAASAVATAGAAGGGPDLEASSASLG) is disordered. Positions 15–30 (AAQVGTGAASAVATAG) are enriched in low complexity.

It belongs to the TENT family.

Its subcellular location is the cytoplasm. It localises to the nucleus. It catalyses the reaction RNA(n) + ATP = RNA(n)-3'-adenine ribonucleotide + diphosphate. Functionally, catalyzes the transfer of one adenosine molecule from an ATP to an mRNA poly(A) tail bearing a 3'-OH terminal group in an ATP hydrolysis-dependent manner. May be involved in maintaining the translation efficiency of at least some genes through preventing degradation of their mRNAs. Prefers RNA molecules that are adenosine-rich close to 3'-end. In addition, may inhibit cell proliferation and cell cycle progression through ubiquitination of beta-catenin/CTNNB1. This is Terminal nucleotidyltransferase 5B from Rattus norvegicus (Rat).